The primary structure comprises 211 residues: Claudin-1 (211 aa).

Residues 1-7 are Cytoplasmic-facing; the sequence is MANAGLQ. Residues 8–28 traverse the membrane as a helical segment; it reads LLGFILASLGWIGSIVSTALP. The Extracellular portion of the chain corresponds to 29 to 81; it reads QWKIYSYAGDNIVTAQAIYEGLWMSCVSQSTGQIQCKVFDSLLNLNSTLQATR. C54 and C64 are joined by a disulfide. Residues 82–102 form a helical membrane-spanning segment; the sequence is ALMVIGILLGLIAIFVSTIGM. The Cytoplasmic portion of the chain corresponds to 103–115; sequence KCMRCLEDDEVQK. Residues 116-136 form a helical membrane-spanning segment; sequence MWMAVIGGIIFVISGLATLVA. The Extracellular portion of the chain corresponds to 137–163; the sequence is TAWYGNRIVQEFYDPMTPVNARYEFGQ. The helical transmembrane segment at 164–184 threads the bilayer; the sequence is ALFTGWAAASLCLLGGALLSC. The Cytoplasmic portion of the chain corresponds to 185-211; the sequence is SCPRKTTSYPTPRPYPKPTPSSGKDYV. The segment at 190-211 is disordered; the sequence is TTSYPTPRPYPKPTPSSGKDYV. Positions 210-211 are interactions with TJP1, TJP2, TJP3 and PATJ; sequence YV.

Belongs to the claudin family. As to quaternary structure, can form homo- and heteropolymers with other CLDN. Homopolymers interact with CLDN3, but not CLDN2, homopolymers. Directly interacts with TJP1/ZO-1, TJP2/ZO-2 and TJP3/ZO-3. Interacts with MPDZ and PATJ. Interacts with OCLN, CD81, CLDN4, CLDN6 and CLDN9. Detected in epididymis (at protein level). Detected in testis and epididymis.

It is found in the cell junction. The protein resides in the tight junction. The protein localises to the cell membrane. It localises to the basolateral cell membrane. Claudins function as major constituents of the tight junction complexes that regulate the permeability of epithelia. While some claudin family members play essential roles in the formation of impermeable barriers, others mediate the permeability to ions and small molecules. Often, several claudin family members are coexpressed and interact with each other, and this determines the overall permeability. CLDN1 is required to prevent the paracellular diffusion of small molecules through tight junctions in the epidermis and is required for the normal barrier function of the skin. Required for normal water homeostasis and to prevent excessive water loss through the skin, probably via an indirect effect on the expression levels of other proteins, since CLDN1 itself seems to be dispensable for water barrier formation in keratinocyte tight junctions. The polypeptide is Claudin-1 (Cldn1) (Rattus norvegicus (Rat)).